Reading from the N-terminus, the 129-residue chain is Small ribosomal subunit protein uS11 (129 aa).

This sequence belongs to the universal ribosomal protein uS11 family. In terms of assembly, part of the 30S ribosomal subunit. Interacts with proteins S7 and S18. Binds to IF-3.

Located on the platform of the 30S subunit, it bridges several disparate RNA helices of the 16S rRNA. Forms part of the Shine-Dalgarno cleft in the 70S ribosome. The protein is Small ribosomal subunit protein uS11 of Oleidesulfovibrio alaskensis (strain ATCC BAA-1058 / DSM 17464 / G20) (Desulfovibrio alaskensis).